An 86-amino-acid chain; its full sequence is Small ribosomal subunit protein uS17 (86 aa).

This sequence belongs to the universal ribosomal protein uS17 family. Part of the 30S ribosomal subunit.

Its function is as follows. One of the primary rRNA binding proteins, it binds specifically to the 5'-end of 16S ribosomal RNA. The polypeptide is Small ribosomal subunit protein uS17 (Caldicellulosiruptor saccharolyticus (strain ATCC 43494 / DSM 8903 / Tp8T 6331)).